A 4036-amino-acid chain; its full sequence is Hybrid PKS-NRPS synthetase iliA (4036 aa).

In terms of domain architecture, Ketosynthase family 3 (KS3) spans 7–439 (PEPIAVIGSA…GTNAHAIIES (433 aa)). Residues Cys181, His318, and His359 each act as for beta-ketoacyl synthase activity in the active site. The malonyl-CoA:ACP transacylase (MAT) domain stretch occupies residues 561–886 (IFTGQGAQWP…LKRNGSDVEA (326 aa)). The N-terminal hotdog fold stretch occupies residues 955–1092 (HELLGRRTPD…GDLVVHLGAD (138 aa)). Residues 955–1262 (HELLGRRTPD…ATNMVGEQDA (308 aa)) are dehydratase (DH) domain. One can recognise a PKS/mFAS DH domain in the interval 955–1263 (HELLGRRTPD…TNMVGEQDAS (309 aa)). His987 functions as the Proton acceptor; for dehydratase activity in the catalytic mechanism. A C-terminal hotdog fold region spans residues 1109 to 1263 (LVNIDGERVY…TNMVGEQDAS (155 aa)). Asp1168 serves as the catalytic Proton donor; for dehydratase activity. The tract at residues 1402 to 1601 (EDDMLDRFYM…FSGADTVMHD (200 aa)) is methyltransferase (MT) domain. Residues 2136–2277 (KTYFMVGMAG…SVATVIGNIG (142 aa)) form a ketoreductase (KR) domain region. Positions 2425–2502 (EAVAAVVKAF…QVCTWATKKV (78 aa)) constitute a Carrier 1 domain. Ser2462 carries the post-translational modification O-(pantetheine 4'-phosphoryl)serine. Disordered stretches follow at residues 2520-2583 (AEKT…KLGT) and 2597-2621 (DADA…NRPE). Pro residues predominate over residues 2530 to 2540 (APAPDAAPAPA). A condensation (C) domain region spans residues 2627–3054 (IMSQAQSRIW…HLDITECEIY (428 aa)). The tract at residues 3088 to 3485 (SLHSDKSAVK…GTLLCLGRLD (398 aa)) is adenylation (A) (KR) domain. The interval 3088 to 3485 (SLHSDKSAVK…GTLLCLGRLD (398 aa)) is reductase (RED) domain. The Carrier 2 domain occupies 3596–3675 (EKMTIREGEV…EMARRIDEHQ (80 aa)). O-(pantetheine 4'-phosphoryl)serine is present on Ser3635.

In the C-terminal section; belongs to the NRP synthetase family.

It carries out the reaction L-tyrosine + holo-[ACP] + 7 malonyl-CoA + acetyl-CoA + 8 AH2 + 2 S-adenosyl-L-methionine + ATP + 4 H(+) = N-[(4E,6E,10S,12Z,14E)-6,10-dimethyl-3-oxohexadeca-4,6,12,14-tetraenoyl]-L-tyrosyl-[ACP] + 8 A + AMP + 2 S-adenosyl-L-homocysteine + 7 CO2 + diphosphate + 8 CoA + 6 H2O. It participates in mycotoxin biosynthesis. Hybrid PKS-NRPS synthetase; part of the gene cluster that mediates the biosynthesis of ilicicolin H, a 4-hydroxy-2-pyridonealkaloid that has potent and broad antifungal activities by inhibiting the mitochondrial respiration chain. IliA assembles the backbone of ilicicolin H. The PKS portion and trans-acting enoyl reductase iliB work together to construct an octaketide, and two methyl groups are introduced by the MT domain during the chain assembly. The nascent chain is then condensed with tyrosine, catalyzed by the C domain, and the resulting PKS-NRPS hybrid is offloaded by the RED domain to form an advanced tetramic acid intermediate. The biosynthesis of ilicicolin H starts with formation of the tetramic acid by the hybrid PKS-NRPS synthetase iliA with the partnering trans-enoyl reductase iliB since iliA lacks a designated enoylreductase (ER) domain. The cytochrome P450 monooxygenase iliC then catalyzes the ring expansion of the tetramate to the acyclic 2-pyridone. The pericyclase iliD further converts the acyclic 2-pyridone into 8-epi-ilicicolin H. 8-epi-ilicicolin H might then spontaneously convert to ilicicolin H, since ilicicolin H is produced in the absence of the epimerase iliE, in contrast to what was observed for the Talaromyces variabilis ilicolin H biosynthetic pathway. The protein is Hybrid PKS-NRPS synthetase iliA of Neonectria sp. (strain DH2).